A 703-amino-acid polypeptide reads, in one-letter code: MLHFLETDIAGRKLKVECGKTGMLSNCAMFISYGDTVVMVNVNASEKPREGIDFFPLSIEYEERQYSVGKIPGGFVKREGRPSEKSILHARAIDRPLRPLFPKGYRNDVQVVCTVMSVEQDNLPEILAMNGASMALCLSDIPFTTPVATVSVGCIDGKFVLNPTLEEREKSSLDLTVCATNERVMMLEAGADEIPEDLMIAAIDFGFNACQDIVAFQEKAMKEFGKEKVTPELYHPKEEIEKDVTEFAFESIKEIMYITDRDERNLRLREIKEKISNEFAEKYPDDGADIDEVVYTLQKKVVRNMLLKEHRRPDGRRFDEIRPISCDVDLLPRTHGSGLFTRGLTQVMTVTTLGPIGDAQVIDGLGVEESKRYMHHYNFPPYSTGEVKPLRGPNRREIGHGALAEKALVPLIPSEEEFPYTIRLVSEVLSSNGSTSQASVCGSTLALMDAGVPIKRPAAGIAMGLITSEDLSKEAVITDIQGLEDFFGDMDFKVAGTEKGITAIQVDTKIHGLSKYCIKTAINDARKARLFILEKMVACINEPRKELSTYAPRAYTINIDTDKIRTLIGTGGKTINKIIEETGVKIDIREDGTVFVLSSDADSANRALKMIDDLTKDVKVGEVYLGKVTKITNFGAFVEVLPGKEGLVHISKLDINKVNKVEDVVSVGDEILVKVTDIDNQGRVNLSRKDVLKQQESNNSKEK.

2 residues coordinate Mg(2+): aspartate 485 and aspartate 491. A KH domain is found at 552 to 611 (PRAYTINIDTDKIRTLIGTGGKTINKIIEETGVKIDIREDGTVFVLSSDADSANRALKMI). Positions 621 to 689 (GEVYLGKVTK…NQGRVNLSRK (69 aa)) constitute an S1 motif domain.

It belongs to the polyribonucleotide nucleotidyltransferase family. It depends on Mg(2+) as a cofactor.

The protein resides in the cytoplasm. The catalysed reaction is RNA(n+1) + phosphate = RNA(n) + a ribonucleoside 5'-diphosphate. Its function is as follows. Involved in mRNA degradation. Catalyzes the phosphorolysis of single-stranded polyribonucleotides processively in the 3'- to 5'-direction. The polypeptide is Polyribonucleotide nucleotidyltransferase (Clostridium acetobutylicum (strain ATCC 824 / DSM 792 / JCM 1419 / IAM 19013 / LMG 5710 / NBRC 13948 / NRRL B-527 / VKM B-1787 / 2291 / W)).